We begin with the raw amino-acid sequence, 486 residues long: Betaine aldehyde dehydrogenase (486 aa).

K(+)-binding residues include T23 and D90. 147–149 (GAW) is an NAD(+) binding site. K159 acts as the Charge relay system in catalysis. Residues 173 to 176 (KPSE) and 226 to 229 (ESGT) each bind NAD(+). L241 contributes to the K(+) binding site. E247 functions as the Proton acceptor in the catalytic mechanism. The NAD(+) site is built by G249, C281, and E382. The Nucleophile role is filled by C281. At C281 the chain carries Cysteine sulfenic acid (-SOH). K(+) is bound by residues K452 and G455. E459 functions as the Charge relay system in the catalytic mechanism.

Belongs to the aldehyde dehydrogenase family. In terms of assembly, dimer of dimers. K(+) is required as a cofactor.

It carries out the reaction betaine aldehyde + NAD(+) + H2O = glycine betaine + NADH + 2 H(+). It participates in amine and polyamine biosynthesis; betaine biosynthesis via choline pathway; betaine from betaine aldehyde: step 1/1. Its function is as follows. Involved in the biosynthesis of the osmoprotectant glycine betaine. Catalyzes the irreversible oxidation of betaine aldehyde to the corresponding acid. The sequence is that of Betaine aldehyde dehydrogenase from Vibrio vulnificus (strain CMCP6).